We begin with the raw amino-acid sequence, 298 residues long: NAD kinase (298 aa).

The Proton acceptor role is filled by aspartate 80. Residues 80-81 (DG), 154-155 (ND), arginine 182, aspartate 184, 195-200 (TAYALS), alanine 219, and glutamine 253 contribute to the NAD(+) site.

The protein belongs to the NAD kinase family. A divalent metal cation serves as cofactor.

Its subcellular location is the cytoplasm. It carries out the reaction NAD(+) + ATP = ADP + NADP(+) + H(+). Its function is as follows. Involved in the regulation of the intracellular balance of NAD and NADP, and is a key enzyme in the biosynthesis of NADP. Catalyzes specifically the phosphorylation on 2'-hydroxyl of the adenosine moiety of NAD to yield NADP. This Acidovorax sp. (strain JS42) protein is NAD kinase.